We begin with the raw amino-acid sequence, 253 residues long: Exosome complex component Rrp4 (253 aa).

The S1 motif domain occupies 80–153 (GDIVIGIVVD…SRGPILTVQD (74 aa)).

Belongs to the RRP4 family. Component of the archaeal exosome complex. Forms a trimer of Rrp4 and/or Csl4 subunits. The trimer associates with a hexameric ring-like arrangement composed of 3 Rrp41-Rrp42 heterodimers.

It localises to the cytoplasm. Non-catalytic component of the exosome, which is a complex involved in RNA degradation. Increases the RNA binding and the efficiency of RNA degradation. Confers strong poly(A) specificity to the exosome. This chain is Exosome complex component Rrp4, found in Ignisphaera aggregans (strain DSM 17230 / JCM 13409 / AQ1.S1).